A 416-amino-acid chain; its full sequence is MAIIDNLGQNAKKASFLLAQLGTEAKNTALLKVAEALLAELPYILEENAKDVALAQEHGISAIMVDRLRLDEKRLQDIASGVRDVAALGDPIGQVVRGYTNMVGLKIIQKRVPLGVIAMIFESRPNVSVDAFSLAFKTGNAIILRGGRDAICSNTALVNVIRRTLASFGLDENAVQLVEDTSHEVAKELMAAVDYVDVLIPRGGARLIQTVKKEAKVPVIETGVGNVHIYVDEFADLDMASKIVVNAKTQRPSVCNAAEGLLVHEKVASDFLPKLEAAINQIHPVEFRADDRAQKILKNAQPASQEDYATEFLDYIISVKIVNSLGEAIDWINTYTSHHSESIITRDIQAAERFQDEVDAAAVYVNASTRFTDGFVFGLGAEIGISTQKLHARGPMGLEALTSTKFYINGKGQIRE.

The protein belongs to the gamma-glutamyl phosphate reductase family.

The protein resides in the cytoplasm. It catalyses the reaction L-glutamate 5-semialdehyde + phosphate + NADP(+) = L-glutamyl 5-phosphate + NADPH + H(+). The protein operates within amino-acid biosynthesis; L-proline biosynthesis; L-glutamate 5-semialdehyde from L-glutamate: step 2/2. Functionally, catalyzes the NADPH-dependent reduction of L-glutamate 5-phosphate into L-glutamate 5-semialdehyde and phosphate. The product spontaneously undergoes cyclization to form 1-pyrroline-5-carboxylate. The sequence is that of Gamma-glutamyl phosphate reductase from Streptococcus mutans serotype c (strain ATCC 700610 / UA159).